Reading from the N-terminus, the 229-residue chain is 2-phytyl-1,4-naphtoquinone methyltransferase (229 aa).

Belongs to the class I-like SAM-binding methyltransferase superfamily. MenG/UbiE family.

The enzyme catalyses demethylphylloquinol + S-adenosyl-L-methionine = phylloquinol + S-adenosyl-L-homocysteine + H(+). Its pathway is cofactor biosynthesis; phylloquinone biosynthesis. Its function is as follows. Methyltransferase required for the conversion of 2-phytyl-1,4-beta-naphthoquinol to phylloquinol. This Trichormus variabilis (strain ATCC 29413 / PCC 7937) (Anabaena variabilis) protein is 2-phytyl-1,4-naphtoquinone methyltransferase.